Reading from the N-terminus, the 462-residue chain is Sensor histidine kinase RegB (462 aa).

The Cytoplasmic portion of the chain corresponds to 1–25; that stretch reads MILGPDGILNRDTRGDWWRLRTLIL. The chain crosses the membrane as a helical span at residues 26 to 45; it reads LRWMAVAGQLAAIVVTDWYL. The Extracellular portion of the chain corresponds to 46–51; the sequence is GVRLPM. Residues 52-70 form a helical membrane-spanning segment; the sequence is GLCFMAVGASVIANVIATF. Residues 71–78 lie on the Cytoplasmic side of the membrane; the sequence is VFPQNRRL. A helical membrane pass occupies residues 79–96; that stretch reads TEFQALMILLFDLTQLSF. The Extracellular segment spans residues 97–103; sequence LLFLTGG. A helical transmembrane segment spans residues 104–123; sequence LTNPFALLILAPVTISGVAL. Over 124–129 the chain is Cytoplasmic; sequence DVRTTV. Residues 130–149 form a helical membrane-spanning segment; it reads ILGAIAIGLLTFTAYFHLPL. Residues 150-164 lie on the Extracellular side of the membrane; it reads ILADGSSLSVPRMFE. A helical transmembrane segment spans residues 165 to 182; that stretch reads FGFWLAIVIGILFLGLYS. The Cytoplasmic segment spans residues 183-462; the sequence is RRVAIEIRSM…PLGENVLIQT (280 aa). A Histidine kinase domain is found at 218-445; the sequence is AAAHELGTPL…IVEVIWPVDR (228 aa). Phosphohistidine; by autocatalysis is present on His-221.

The protein localises to the cell inner membrane. The enzyme catalyses ATP + protein L-histidine = ADP + protein N-phospho-L-histidine.. Functionally, member of the two-component regulatory system RegB/RegA. Involved in the positive regulation of photosynthesis gene expression in response to anaerobiosis. Also involved in positive regulation of the cbbI and cbbII Calvin cycle CO2 fixation operons, as well as in regulation of expression of genes involved in alternative CO2 fixation pathways. Phosphorylates RegA/PrrA. In Cereibacter sphaeroides (Rhodobacter sphaeroides), this protein is Sensor histidine kinase RegB (regB).